The sequence spans 259 residues: Probable ABC transporter permease protein RP096 (259 aa).

5 consecutive transmembrane segments (helical) span residues 13–35 (TIKF…SSII), 49–69 (LFIG…SGAV), 148–168 (VIAA…IGVM), 195–215 (PIDV…ISII), and 237–257 (AVVN…ELFF).

Belongs to the MlaE permease family.

The protein resides in the cell inner membrane. Could be part of an ABC transporter complex. This is Probable ABC transporter permease protein RP096 from Rickettsia prowazekii (strain Madrid E).